Reading from the N-terminus, the 826-residue chain is Ribonucleoside-diphosphate reductase large subunit (826 aa).

Residues T171, 186-187 (SC), G217, 387-391 (NLCAE), and 594-598 (PTSGC) each bind substrate. The cysteines at positions 187 and 403 are disulfide-linked. N387 acts as the Proton acceptor in catalysis. C389 acts as the Cysteine radical intermediate in catalysis. E391 functions as the Proton acceptor in the catalytic mechanism. Residues 747 to 769 (SVPREEQNERSPAEQMPPRPMEP) are disordered. Positions 749-758 (PREEQNERSP) are enriched in basic and acidic residues.

Belongs to the ribonucleoside diphosphate reductase large chain family. Heterotetramer composed of a homodimer of the large subunit (R1) and a homodimer of the small subunit (R2). Larger multisubunit protein complex are also active, composed of (R1)n(R2)n.

The enzyme catalyses a 2'-deoxyribonucleoside 5'-diphosphate + [thioredoxin]-disulfide + H2O = a ribonucleoside 5'-diphosphate + [thioredoxin]-dithiol. In terms of biological role, ribonucleoside-diphosphate reductase holoenzyme provides the precursors necessary for viral DNA synthesis. Allows virus growth in non-dividing cells, as well as reactivation from latency in infected hosts. Catalyzes the biosynthesis of deoxyribonucleotides from the corresponding ribonucleotides. The polypeptide is Ribonucleoside-diphosphate reductase large subunit (Homo sapiens (Human)).